We begin with the raw amino-acid sequence, 349 residues long: Methionine import ATP-binding protein MetN (349 aa).

Residues 5-245 (IDLKNITVQF…PQKQLTRQFV (241 aa)) form the ABC transporter domain. 37–44 (GFSGAGKS) serves as a coordination point for ATP.

It belongs to the ABC transporter superfamily. Methionine importer (TC 3.A.1.24) family. In terms of assembly, the complex is composed of two ATP-binding proteins (MetN), two transmembrane proteins (MetI) and a solute-binding protein (MetQ).

The protein resides in the cell membrane. It carries out the reaction L-methionine(out) + ATP + H2O = L-methionine(in) + ADP + phosphate + H(+). The catalysed reaction is D-methionine(out) + ATP + H2O = D-methionine(in) + ADP + phosphate + H(+). Functionally, part of the ABC transporter complex MetNIQ involved in methionine import. Responsible for energy coupling to the transport system. In Lactobacillus johnsonii (strain CNCM I-12250 / La1 / NCC 533), this protein is Methionine import ATP-binding protein MetN.